The following is a 300-amino-acid chain: tRNA dimethylallyltransferase (300 aa).

8 to 15 (GASASGKS) is an ATP binding site. Substrate is bound at residue 10–15 (SASGKS). The interval 33–36 (DSLS) is interaction with substrate tRNA.

The protein belongs to the IPP transferase family. As to quaternary structure, monomer. The cofactor is Mg(2+).

It catalyses the reaction adenosine(37) in tRNA + dimethylallyl diphosphate = N(6)-dimethylallyladenosine(37) in tRNA + diphosphate. Catalyzes the transfer of a dimethylallyl group onto the adenine at position 37 in tRNAs that read codons beginning with uridine, leading to the formation of N6-(dimethylallyl)adenosine (i(6)A). The sequence is that of tRNA dimethylallyltransferase from Wolinella succinogenes (strain ATCC 29543 / DSM 1740 / CCUG 13145 / JCM 31913 / LMG 7466 / NCTC 11488 / FDC 602W) (Vibrio succinogenes).